The chain runs to 74 residues: UPF0352 protein MS1910 (74 aa).

This sequence belongs to the UPF0352 family.

The polypeptide is UPF0352 protein MS1910 (Mannheimia succiniciproducens (strain KCTC 0769BP / MBEL55E)).